Consider the following 209-residue polypeptide: Large ribosomal subunit protein uL3 (209 aa).

It belongs to the universal ribosomal protein uL3 family. Part of the 50S ribosomal subunit. Forms a cluster with proteins L14 and L19.

Its function is as follows. One of the primary rRNA binding proteins, it binds directly near the 3'-end of the 23S rRNA, where it nucleates assembly of the 50S subunit. This Nitratidesulfovibrio vulgaris (strain ATCC 29579 / DSM 644 / CCUG 34227 / NCIMB 8303 / VKM B-1760 / Hildenborough) (Desulfovibrio vulgaris) protein is Large ribosomal subunit protein uL3.